We begin with the raw amino-acid sequence, 520 residues long: GMP synthase [glutamine-hydrolyzing] (520 aa).

Residues 9–202 (KILILDFGSQ…VRKICGCSGK (194 aa)) enclose the Glutamine amidotransferase type-1 domain. Cys86 (nucleophile) is an active-site residue. Active-site residues include His176 and Glu178. Positions 203–395 (WTPGQIIEDA…LGLPHQMVWR (193 aa)) constitute a GMPS ATP-PPase domain. Residue 230-236 (SGGVDSS) coordinates ATP.

As to quaternary structure, homodimer.

The catalysed reaction is XMP + L-glutamine + ATP + H2O = GMP + L-glutamate + AMP + diphosphate + 2 H(+). It functions in the pathway purine metabolism; GMP biosynthesis; GMP from XMP (L-Gln route): step 1/1. Its function is as follows. Catalyzes the synthesis of GMP from XMP. This Geotalea daltonii (strain DSM 22248 / JCM 15807 / FRC-32) (Geobacter daltonii) protein is GMP synthase [glutamine-hydrolyzing].